The following is a 1609-amino-acid chain: Transmembrane protein 131-like (1609 aa).

Residues 1-40 (MAGLRRPQPGCYCRTAAAVNLLLGVFQVLLPCCRPGGAQG) form the signal peptide. Residues 41–869 (QAIEPLPNVV…VVPGPSWEES (829 aa)) lie on the Extracellular side of the membrane. N343, N439, N522, N593, N709, and N846 each carry an N-linked (GlcNAc...) asparagine glycan. A required for Wnt-signaling inhibition and LRP6 degradation region spans residues 696-916 (DYGKVTSLIL…QNASSSSQQN (221 aa)). Residues 870 to 890 (FWRLTVFFVSLSLLGVILIAF) form a helical membrane-spanning segment. Residues 891–1609 (QQAQYILMEF…SRDSSYCGNV (719 aa)) lie on the Cytoplasmic side of the membrane. Disordered stretches follow at residues 946-974 (RGKNCLPVNTPQSRIQNAAKRSPATYGHS), 991-1014 (TAAASSTSTTTEEKQTSPLGSSLP), 1108-1144 (KTSKKLPENHLPRNSPQYHQPDLPEISRKNNGNNQQV), 1159-1178 (VDTKPSSEKKIHKTSREDMF), and 1304-1340 (SSSDCGSSSGSVRASRGSWGSWSSTSSSDGDKKPMVD). Polar residues predominate over residues 952 to 961 (PVNTPQSRIQ). Positions 991–1000 (TAAASSTSTT) are enriched in low complexity. At S1122 the chain carries Phosphoserine. Over residues 1304 to 1331 (SSSDCGSSSGSVRASRGSWGSWSSTSSS) the composition is skewed to low complexity.

The protein belongs to the TMEM131 family. As to expression, expressed in thymocytes.

Its subcellular location is the cell membrane. The protein resides in the cytoplasm. It is found in the endoplasmic reticulum. Functionally, membrane-associated form that antagonizes canonical Wnt signaling by triggering lysosome-dependent degradation of Wnt-activated LRP6. Regulates thymocyte proliferation. This Homo sapiens (Human) protein is Transmembrane protein 131-like.